The following is a 329-amino-acid chain: Ribosomal protein L11 methyltransferase (329 aa).

S-adenosyl-L-methionine is bound by residues Thr177, Gly198, Asp220, and Asn264.

This sequence belongs to the methyltransferase superfamily. PrmA family.

The protein resides in the cytoplasm. It catalyses the reaction L-lysyl-[protein] + 3 S-adenosyl-L-methionine = N(6),N(6),N(6)-trimethyl-L-lysyl-[protein] + 3 S-adenosyl-L-homocysteine + 3 H(+). Functionally, methylates ribosomal protein L11. This is Ribosomal protein L11 methyltransferase from Helicobacter acinonychis (strain Sheeba).